Reading from the N-terminus, the 430-residue chain is Histidine--tRNA ligase (430 aa).

It belongs to the class-II aminoacyl-tRNA synthetase family. Homodimer.

It is found in the cytoplasm. It catalyses the reaction tRNA(His) + L-histidine + ATP = L-histidyl-tRNA(His) + AMP + diphosphate + H(+). The sequence is that of Histidine--tRNA ligase from Parasynechococcus marenigrum (strain WH8102).